Consider the following 340-residue polypeptide: Adenosine receptor A2b (340 aa).

Over 1-6 (MNTMKT) the chain is Extracellular. Residues 7 to 31 (TYIVLELIIAVLSIAGNVLVCWAVA) traverse the membrane as a helical segment. At 32 to 41 (INSTLKNATN) the chain is on the cytoplasmic side. A helical membrane pass occupies residues 42–65 (YFLVSLAVADIAVGLLAIPFAITI). The Extracellular segment spans residues 66–76 (SIGFQVDFHSC). Cysteine 76 and cysteine 171 are joined by a disulfide. Residues 77 to 99 (LFFACFVLVLTQSSIFSLLAVAI) traverse the membrane as a helical segment. Residues 100-119 (DRYLAIKIPLRYNSLVTGKR) lie on the Cytoplasmic side of the membrane. The helical transmembrane segment at 120 to 142 (ARGLIAVLWLLSFVIGLTPLMGW) threads the bilayer. Residues 143–178 (NKAMSGCPNSTNETGADHGAGHHGCFISCLFENVVT) are Extracellular-facing. N-linked (GlcNAc...) asparagine glycosylation is found at asparagine 151 and asparagine 154. Glutamate 174 is an adenosine binding site. Residues 179–203 (MSYMVYFNFFGCVLLPLIIMLGIYI) traverse the membrane as a helical segment. Residues 204–235 (KIFMVACKQLHQIELMGNSRTTLQKEVHAAKS) are Cytoplasmic-facing. Residues 236–259 (LAIIVGLFAFCWLPLHILNCITHF) traverse the membrane as a helical segment. Adenosine is bound at residue asparagine 254. Residues 260 to 267 (HEEFSKSK) lie on the Extracellular side of the membrane. A helical membrane pass occupies residues 268-291 (PEWVMYVAIILSHANSVINPIIYA). Residues serine 279 and histidine 280 each coordinate adenosine. The Cytoplasmic segment spans residues 292–340 (YRIRDFRYTFHKIISKILCKTDDFPKCTTDNNQHLTVTNVNAPAASVTI). Cysteine 310 carries S-palmitoyl cysteine lipidation.

Belongs to the G-protein coupled receptor 1 family.

The protein resides in the cell membrane. Functionally, receptor for adenosine. The activity of this receptor is mediated by G proteins which activate adenylyl cyclase. The chain is Adenosine receptor A2b (ADORA2B) from Gallus gallus (Chicken).